We begin with the raw amino-acid sequence, 465 residues long: 3-isopropylmalate dehydratase large subunit (465 aa).

[4Fe-4S] cluster-binding residues include C347, C407, and C410.

The protein belongs to the aconitase/IPM isomerase family. LeuC type 1 subfamily. As to quaternary structure, heterodimer of LeuC and LeuD. The cofactor is [4Fe-4S] cluster.

It catalyses the reaction (2R,3S)-3-isopropylmalate = (2S)-2-isopropylmalate. Its pathway is amino-acid biosynthesis; L-leucine biosynthesis; L-leucine from 3-methyl-2-oxobutanoate: step 2/4. In terms of biological role, catalyzes the isomerization between 2-isopropylmalate and 3-isopropylmalate, via the formation of 2-isopropylmaleate. This is 3-isopropylmalate dehydratase large subunit from Tolumonas auensis (strain DSM 9187 / NBRC 110442 / TA 4).